The sequence spans 307 residues: Bifunctional protein FolD 3 (307 aa).

NADP(+) contacts are provided by residues 169 to 171 (GRS), S194, and I235.

Belongs to the tetrahydrofolate dehydrogenase/cyclohydrolase family. In terms of assembly, homodimer.

The catalysed reaction is (6R)-5,10-methylene-5,6,7,8-tetrahydrofolate + NADP(+) = (6R)-5,10-methenyltetrahydrofolate + NADPH. It carries out the reaction (6R)-5,10-methenyltetrahydrofolate + H2O = (6R)-10-formyltetrahydrofolate + H(+). The protein operates within one-carbon metabolism; tetrahydrofolate interconversion. Functionally, catalyzes the oxidation of 5,10-methylenetetrahydrofolate to 5,10-methenyltetrahydrofolate and then the hydrolysis of 5,10-methenyltetrahydrofolate to 10-formyltetrahydrofolate. In Ectopseudomonas mendocina (strain ymp) (Pseudomonas mendocina), this protein is Bifunctional protein FolD 3.